A 557-amino-acid polypeptide reads, in one-letter code: Potassium-transporting ATPase potassium-binding subunit (557 aa).

The next 12 membrane-spanning stretches (helical) occupy residues 5-25 (GFLL…PLGS), 63-83 (LCAI…MLLG), 132-152 (GLTV…FALI), 170-190 (LLRI…LFFI), 253-273 (FVQM…FGEV), 283-303 (LLWA…WAEV), 329-349 (VLVS…AVIA), 356-376 (ALGG…FGGV), 379-399 (GLYG…LMIG), 416-436 (LTAL…ALAM), 484-504 (LLAF…MAIA), and 526-546 (LFVG…FIPA).

Belongs to the KdpA family. The system is composed of three essential subunits: KdpA, KdpB and KdpC.

The protein localises to the cell inner membrane. Part of the high-affinity ATP-driven potassium transport (or Kdp) system, which catalyzes the hydrolysis of ATP coupled with the electrogenic transport of potassium into the cytoplasm. This subunit binds the periplasmic potassium ions and delivers the ions to the membrane domain of KdpB through an intramembrane tunnel. This is Potassium-transporting ATPase potassium-binding subunit from Escherichia coli (strain K12 / MC4100 / BW2952).